We begin with the raw amino-acid sequence, 80 residues long: Large ribosomal subunit protein eL14 (80 aa).

It belongs to the eukaryotic ribosomal protein eL14 family.

This Methanocaldococcus jannaschii (strain ATCC 43067 / DSM 2661 / JAL-1 / JCM 10045 / NBRC 100440) (Methanococcus jannaschii) protein is Large ribosomal subunit protein eL14.